The sequence spans 117 residues: UPF0251 protein cbdbA217 (117 aa).

Belongs to the UPF0251 family.

The sequence is that of UPF0251 protein cbdbA217 from Dehalococcoides mccartyi (strain CBDB1).